The following is a 562-amino-acid chain: Glucan 1,3-beta-glucosidase 2 (562 aa).

Positions 1–22 (MPLKSFFFSAFLVLCLSKFTQG) are cleaved as a signal peptide. Residues Asn-50, Asn-77, Asn-86, Asn-90, Asn-106, Asn-157, and Asn-220 are each glycosylated (N-linked (GlcNAc...) asparagine). The active-site Proton donor is the Glu-254. Asn-281, Asn-285, Asn-310, Asn-317, and Asn-322 each carry an N-linked (GlcNAc...) asparagine glycan. His-334 serves as the catalytic Nucleophile. Asn-401, Asn-480, and Asn-539 each carry an N-linked (GlcNAc...) asparagine glycan.

It belongs to the glycosyl hydrolase 5 (cellulase A) family.

It localises to the cell membrane. It catalyses the reaction Successive hydrolysis of beta-D-glucose units from the non-reducing ends of (1-&gt;3)-beta-D-glucans, releasing alpha-glucose.. This chain is Glucan 1,3-beta-glucosidase 2 (EXG2), found in Saccharomyces cerevisiae (strain ATCC 204508 / S288c) (Baker's yeast).